A 461-amino-acid polypeptide reads, in one-letter code: Cysteine--tRNA ligase (461 aa).

Cys-30 contacts Zn(2+). The short motif at 32 to 42 (VTVYDLCHIGH) is the 'HIGH' region element. 3 residues coordinate Zn(2+): Cys-211, His-236, and Glu-240. A 'KMSKS' region motif is present at residues 268-272 (KMSKS). ATP is bound at residue Lys-271.

The protein belongs to the class-I aminoacyl-tRNA synthetase family. As to quaternary structure, monomer. Requires Zn(2+) as cofactor.

The protein localises to the cytoplasm. It carries out the reaction tRNA(Cys) + L-cysteine + ATP = L-cysteinyl-tRNA(Cys) + AMP + diphosphate. In Shewanella sp. (strain MR-7), this protein is Cysteine--tRNA ligase.